Reading from the N-terminus, the 399-residue chain is S-adenosylmethionine synthase (399 aa).

His-17 is a binding site for ATP. Residue Asp-19 coordinates Mg(2+). Residue Glu-52 coordinates K(+). Residues Glu-65 and Gln-109 each contribute to the L-methionine site. Residues 109-119 (QSADIAQGVDA) form a flexible loop region. ATP-binding positions include 177 to 179 (DSK), 243 to 244 (KF), Asp-252, 258 to 259 (RK), Ala-275, and Lys-279. Position 252 (Asp-252) interacts with L-methionine. An L-methionine-binding site is contributed by Lys-283.

The protein belongs to the AdoMet synthase family. Homotetramer; dimer of dimers. The cofactor is Mg(2+). It depends on K(+) as a cofactor.

Its subcellular location is the cytoplasm. It catalyses the reaction L-methionine + ATP + H2O = S-adenosyl-L-methionine + phosphate + diphosphate. The protein operates within amino-acid biosynthesis; S-adenosyl-L-methionine biosynthesis; S-adenosyl-L-methionine from L-methionine: step 1/1. Its function is as follows. Catalyzes the formation of S-adenosylmethionine (AdoMet) from methionine and ATP. The overall synthetic reaction is composed of two sequential steps, AdoMet formation and the subsequent tripolyphosphate hydrolysis which occurs prior to release of AdoMet from the enzyme. The protein is S-adenosylmethionine synthase of Bradyrhizobium sp. (strain BTAi1 / ATCC BAA-1182).